A 154-amino-acid chain; its full sequence is Pseudo histidine-containing phosphotransfer protein 6 (154 aa).

Met1 carries the post-translational modification N-acetylmethionine. Residues 41 to 137 (SPNFVYDVIN…HYLKNMMHEL (97 aa)) form the HPt domain.

Interacts with AHK5.

It is found in the cytoplasm. The protein localises to the cytosol. It localises to the nucleus. Its function is as follows. Functions as a two-component phosphorelay mediator between cytokinin sensor histidine kinases and response regulators (B-type ARRs). Plays an important role in propagating cytokinin signal transduction. The chain is Pseudo histidine-containing phosphotransfer protein 6 (AHP6) from Arabidopsis thaliana (Mouse-ear cress).